The primary structure comprises 345 residues: Ribosomal RNA small subunit methyltransferase H (345 aa).

S-adenosyl-L-methionine-binding positions include 47 to 49 (GGY), Asp65, Phe92, Asp113, and Gln120. A disordered region spans residues 296–345 (EPGPDEVAGNPRARSAKLRAAERTNAPAHPGGDLMGLLPAPPPQRHGRRR).

This sequence belongs to the methyltransferase superfamily. RsmH family.

It localises to the cytoplasm. The catalysed reaction is cytidine(1402) in 16S rRNA + S-adenosyl-L-methionine = N(4)-methylcytidine(1402) in 16S rRNA + S-adenosyl-L-homocysteine + H(+). Its function is as follows. Specifically methylates the N4 position of cytidine in position 1402 (C1402) of 16S rRNA. The polypeptide is Ribosomal RNA small subunit methyltransferase H (Xanthobacter autotrophicus (strain ATCC BAA-1158 / Py2)).